The primary structure comprises 116 residues: Large ribosomal subunit protein uL24 (116 aa).

Positions 1–27 are disordered; that stretch reads MAGRKSSTPTRHKMHVKTGDTVQVISG.

It belongs to the universal ribosomal protein uL24 family. In terms of assembly, part of the 50S ribosomal subunit.

One of two assembly initiator proteins, it binds directly to the 5'-end of the 23S rRNA, where it nucleates assembly of the 50S subunit. Its function is as follows. One of the proteins that surrounds the polypeptide exit tunnel on the outside of the subunit. This chain is Large ribosomal subunit protein uL24, found in Picosynechococcus sp. (strain ATCC 27264 / PCC 7002 / PR-6) (Agmenellum quadruplicatum).